A 308-amino-acid chain; its full sequence is Glutaminase (308 aa).

Substrate is bound by residues S66, N117, E161, N168, Y192, Y244, and V262.

The protein belongs to the glutaminase family. In terms of assembly, homotetramer.

The enzyme catalyses L-glutamine + H2O = L-glutamate + NH4(+). This is Glutaminase from Proteus mirabilis (strain HI4320).